Here is a 2752-residue protein sequence, read N- to C-terminus: Serine/arginine repetitive matrix protein 2 (2752 aa).

Met1 carries the N-acetylmethionine modification. Residues 60 to 92 (HERKRRVELRCLELEEMMEEQGYEEQQIQEKVA) adopt a coiled-coil conformation. N6-acetyllysine is present on Lys101. Glycyl lysine isopeptide (Lys-Gly) (interchain with G-Cter in SUMO2) cross-links involve residues Lys108 and Lys130. Positions 141–2131 (ISDSYVDGSS…MSPTPLDRCR (1991 aa)) are disordered. Phosphotyrosine is present on Tyr145. Residue Lys169 is modified to N6-acetyllysine. Residues 175–185 (RESSSSRSPTP) show a composition bias toward low complexity. 2 stretches are compositionally biased toward basic residues: residues 186–197 (KQKKKKKKKDRG) and 207–249 (RERK…KRSR). Residues 197–259 (GRRSESSSPR…STTPAPKSRR (63 aa)) form a sufficient for RNA-binding region. Residues Ser220 and Ser222 each carry the phosphoserine modification. The span at 263–290 (STSADSASSSDTSRSRSRSAAAKTHTTA) shows a compositional bias: low complexity. The residue at position 286 (Thr286) is a Phosphothreonine. Residues Ser295, Ser297, Ser300, Ser322, and Ser323 each carry the phosphoserine modification. The segment covering 313 to 333 (PGTTSTQRPSSPETATKQPSS) has biased composition (polar residues). The segment covering 335–347 (YEDKDKDKKEKSA) has biased composition (basic and acidic residues). Residues 348–360 (TRPSPSPERSSTG) are compositionally biased toward low complexity. Phosphoserine occurs at positions 351, 353, 357, and 358. Thr359 and Thr367 each carry phosphothreonine. Position 377 is a phosphoserine (Ser377). Residues 380–398 (PLATTPLSQEPVNPPSEAS) show a composition bias toward polar residues. A phosphothreonine mark is found at Thr383 and Thr384. Ser387, Ser395, Ser398, Ser404, and Ser408 each carry phosphoserine. The span at 399–410 (PTRDRSPPKSPE) shows a compositional bias: basic and acidic residues. Residues 411–421 (KLPQSSSSESS) are compositionally biased toward low complexity. Ser424, Ser435, Ser436, Ser437, Ser440, and Ser454 each carry phosphoserine. Positions 461 to 483 (NRSHGRAKRDKSHSHTPSRRMGR) are enriched in basic residues. Ser484, Ser486, Ser506, Ser508, Ser510, Ser534, Ser536, and Ser543 each carry phosphoserine. Residues 491-536 (KRGRSRSRTPTKRGHSRSRSPQWRRSRSAQRWGRSRSPQRRGRSRS) are compositionally biased toward basic residues. Over residues 537-546 (PQRPGWSRSR) the composition is skewed to low complexity. Composition is skewed to basic residues over residues 547-564 (NTQRRGRSRSARRGRSHS), 571-723 (GRSR…RRGR), and 732-742 (NKSRTSQRRSR). Residues Ser702, Ser704, and Ser706 each carry the phosphoserine modification. Residues Ser778, Ser780, and Ser783 each carry the phosphoserine modification. Over residues 790–805 (SQTPPRRSRSGSSQPK) the composition is skewed to low complexity. Residues 806 to 816 (AKSRTPPRRSR) are compositionally biased toward basic residues. Low complexity predominate over residues 828-841 (KTPSRQSHSSSSPH). 2 positions are modified to phosphoserine: Ser846 and Ser854. Polar residues predominate over residues 849–869 (PPRQGSITSPQANEQSVTPQR). Thr856 bears the Phosphothreonine mark. Phosphoserine occurs at positions 857 and 864. Residue Thr866 is modified to Phosphothreonine. Phosphoserine is present on residues Ser871, Ser875, Ser876, Ser908, Ser935, Ser950, Ser952, Ser954, Ser957, Ser968, Ser970, Ser972, Ser973, and Ser974. 2 stretches are compositionally biased toward low complexity: residues 901–917 (SSTPPRQSPSRSSSPQP) and 924–945 (SPRQRSHSGSSSPSPSRVTSRT). Phosphothreonine is present on residues Thr977 and Thr983. Phosphoserine occurs at positions 992 and 994. Tyr996 bears the Phosphotyrosine mark. Position 1003 is a phosphothreonine (Thr1003). Positions 1008–1017 (SLSGSKSPCP) are enriched in low complexity. 6 positions are modified to phosphoserine: Ser1010, Ser1014, Ser1024, Ser1028, Ser1032, and Ser1042. Residues 1040–1064 (KSSTPPGESYFGVSSLQLKGQSQTS) show a composition bias toward polar residues. A Phosphothreonine modification is found at Thr1043. At Tyr1049 the chain carries Phosphotyrosine. Phosphoserine is present on residues Ser1064, Ser1069, Ser1072, Ser1073, Ser1083, Ser1099, Ser1101, Ser1102, and Ser1103. Polar residues predominate over residues 1071-1092 (TSSPEVRQSHSESPSLQSKSQT). Low complexity predominate over residues 1093–1104 (SPKGGRSRSSSP). Position 1106 is a phosphothreonine (Thr1106). Phosphoserine is present on residues Ser1112, Ser1122, Ser1124, Ser1129, Ser1132, Ser1152, Ser1179, Ser1188, and Ser1198. Residues 1132–1159 (SPEQSRFQSDSSSYPTVDSNSLLGQSRL) show a composition bias toward polar residues. A compositionally biased stretch (basic and acidic residues) spans 1204 to 1214 (DTLRTPPRERS). A Phosphothreonine modification is found at Thr1208. A phosphoserine mark is found at Ser1214, Ser1219, Ser1227, Ser1254, Ser1257, Ser1258, Ser1266, Ser1270, and Ser1271. The span at 1216–1233 (AGSSPETKEQNSALPTSS) shows a compositional bias: polar residues. The segment covering 1283–1292 (TLDQSQSQAS) has biased composition (polar residues). Residues Ser1311, Ser1318, Ser1320, Ser1326, Ser1329, Ser1336, Ser1348, Ser1368, Ser1382, Ser1383, Ser1384, Ser1387, Ser1401, Ser1403, and Ser1404 each carry the phosphoserine modification. The segment covering 1318 to 1328 (SNSPLRENSFG) has biased composition (polar residues). The segment covering 1376-1386 (TRSSGHSSSEL) has biased composition (polar residues). A Phosphothreonine modification is found at Thr1413. Ser1415, Ser1421, Ser1423, and Ser1424 each carry phosphoserine. Thr1434 carries the post-translational modification Phosphothreonine. The span at 1441-1452 (SGSSPGLRDGSG) shows a compositional bias: low complexity. Residues Ser1444 and Ser1451 each carry the phosphoserine modification. The residue at position 1453 (Thr1453) is a Phosphothreonine. Polar residues predominate over residues 1453-1463 (TPSRHSLSGSS). Phosphoserine occurs at positions 1458, 1460, 1462, and 1463. Phosphothreonine is present on Thr1472. Phosphoserine is present on residues Ser1482 and Ser1483. Thr1492 bears the Phosphothreonine mark. A phosphoserine mark is found at Ser1497, Ser1499, Ser1501, and Ser1502. Thr1511 is subject to Phosphothreonine. Phosphoserine is present on residues Ser1517, Ser1519, Ser1521, and Ser1522. The residue at position 1531 (Thr1531) is a Phosphothreonine. The span at 1534-1544 (GQRSRSGSSQE) shows a compositional bias: polar residues. Ser1537, Ser1539, Ser1541, Ser1542, and Ser1552 each carry phosphoserine. A compositionally biased stretch (basic and acidic residues) spans 1555-1567 (ERSESDSSPDSKA). Basic residues predominate over residues 1568–1577 (KTRTPLRQRS). Phosphoserine occurs at positions 1577, 1579, 1581, 1582, 1598, 1600, 1601, 1616, 1620, 1621, 1648, 1658, 1691, 1693, and 1694. The segment covering 1638–1657 (SGSSSKGRGPSPEGSSSTES) has biased composition (low complexity). A compositionally biased stretch (basic residues) spans 1681 to 1691 (KSRTPPRRRSS). Thr1698 carries the post-translational modification Phosphothreonine. Phosphoserine occurs at positions 1727, 1729, 1731, 1732, 1762, and 1764. Basic residues-rich tracts occupy residues 1769–1789 (GLQRSRSRSRREKTRTTRRRD) and 1798–1816 (SRRRQRSRSRSRVTRRRRG). Phosphoserine occurs at positions 1818, 1822, 1854, 1857, 1876, and 1878. The span at 1834 to 1854 (SSRRRRGRSRTPPTSRKRSRS) shows a compositional bias: basic residues. The segment covering 1862–2068 (KRSRSRASPA…PRTARGKRSL (207 aa)) has biased composition (basic residues). Thr1880 carries the post-translational modification Phosphothreonine. Residues Ser1884 and Ser1890 each carry the phosphoserine modification. Thr1892 bears the Phosphothreonine mark. A phosphoserine mark is found at Ser1893, Ser1916, Ser1919, Ser1923, and Ser1925. Phosphothreonine occurs at positions 1927 and 1931. Phosphoserine occurs at positions 1946 and 1948. A phosphothreonine mark is found at Thr1950 and Thr1954. A phosphoserine mark is found at Ser1958 and Ser1960. Phosphothreonine occurs at positions 1962 and 1966. 3 positions are modified to phosphoserine: Ser1970, Ser1972, and Ser1975. Position 1978 is a phosphothreonine (Thr1978). Residues Ser1984, Ser1987, Ser1996, Ser1999, Ser2008, Ser2011, Ser2018, and Ser2020 each carry the phosphoserine modification. Thr2022 bears the Phosphothreonine mark. Phosphoserine is present on residues Ser2030 and Ser2032. Thr2034 bears the Phosphothreonine mark. Residues Ser2042, Ser2044, Ser2046, and Ser2067 each carry the phosphoserine modification. Phosphothreonine is present on Thr2069. A compositionally biased stretch (low complexity) spans 2070–2095 (RSPPAIRRRSASGSSSDRSRSATPPA). A phosphoserine mark is found at Ser2071 and Ser2090. Thr2092 is subject to Phosphothreonine. A compositionally biased stretch (polar residues) spans 2097–2124 (RNHSGSRTPPVALNSSRMSCFSRPSMSP). Residues Ser2100 and Ser2102 each carry the phosphoserine modification. Thr2104 carries the phosphothreonine modification. 4 positions are modified to phosphoserine: Ser2118, Ser2121, Ser2123, and Ser2132. Position 2144 is a phosphothreonine (Thr2144). Omega-N-methylarginine occurs at positions 2194, 2207, 2231, and 2246. At Ser2272 the chain carries Phosphoserine. An omega-N-methylarginine mark is found at Arg2274 and Arg2288. Phosphothreonine occurs at positions 2289, 2291, and 2302. Residue Ser2310 is modified to Phosphoserine. The tract at residues 2311–2342 (LTGSGTPPTAANYPSSSRTPQAPASANLVGPR) is disordered. Thr2316 and Thr2329 each carry phosphothreonine. The segment covering 2317 to 2334 (PPTAANYPSSSRTPQAPA) has biased composition (polar residues). A Phosphoserine modification is found at Ser2335. Arg2342 carries the post-translational modification Omega-N-methylarginine. Residues Ser2343, Ser2368, and Ser2376 each carry the phosphoserine modification. Thr2381 carries the post-translational modification Phosphothreonine. Ser2382 bears the Phosphoserine mark. Position 2384 is an asymmetric dimethylarginine; alternate (Arg2384). Arg2384 is subject to Omega-N-methylarginine; alternate. A disordered region spans residues 2389–2752 (AYERVSGRTS…PMRHRSSRSP (364 aa)). Ser2394, Ser2398, and Ser2407 each carry phosphoserine. Phosphothreonine is present on Thr2409. Phosphoserine occurs at positions 2412, 2415, 2426, 2429, 2449, and 2453. Over residues 2426-2439 (SPSSRMGQAPSQSL) the composition is skewed to polar residues. Polar residues predominate over residues 2455–2473 (FSDQSRCLIAQTTPVAGSQ). Low complexity-rich tracts occupy residues 2474–2487 (SLSSGAVATTTSSA), 2515–2526 (AQQPSALAALQP), and 2533–2567 (SSSSSSSSSSSSSSSSSSSSSSSSGSSSSDSEGSS). Ser2581 is subject to Phosphoserine. At Thr2583 the chain carries Phosphothreonine. Lys2587 is covalently cross-linked (Glycyl lysine isopeptide (Lys-Gly) (interchain with G-Cter in SUMO2)). Residue Thr2599 is modified to Phosphothreonine. Residues 2608-2648 (SSSSSSSSSSSSSSSSSSSSSSSSSSSSSSSSSSSSSSSSS) show a composition bias toward low complexity. Positions 2651–2668 (PAKPGPQALPKPASPKKP) are enriched in pro residues. Phosphoserine is present on residues Ser2664, Ser2675, Ser2677, Ser2684, Ser2688, Ser2690, Ser2692, Ser2694, Ser2702, and Ser2706. Positions 2669-2689 (PPGERRSRSPRKPIDSLRDSR) are enriched in basic and acidic residues. Over residues 2707–2716 (PRDQQSSSSE) the composition is skewed to low complexity. The span at 2717-2729 (RGSRRGQRGDSRS) shows a compositional bias: basic and acidic residues. The residue at position 2738 (Thr2738) is a Phosphothreonine. Position 2740 is a phosphoserine (Ser2740). The segment covering 2743 to 2752 (PMRHRSSRSP) has biased composition (basic residues).

The protein belongs to the CWC21 family. Component of pre-catalytic, catalytic and post-catalytic spliceosome complexes. Found in a pre-mRNA splicing complex with SFRS4, SFRS5, SNRP70, SNRPA1, SRRM1 and SRRM2. Component of the minor spliceosome, which splices U12-type introns. Interacts with DHX8. Interacts with CACTIN. As to expression, expressed in liver, placenta, and white blood cells.

The protein resides in the nucleus. Its subcellular location is the nucleus speckle. Its function is as follows. Required for pre-mRNA splicing as component of the spliceosome. As a component of the minor spliceosome, involved in the splicing of U12-type introns in pre-mRNAs. This is Serine/arginine repetitive matrix protein 2 (SRRM2) from Homo sapiens (Human).